We begin with the raw amino-acid sequence, 148 residues long: Ribosomal RNA large subunit methyltransferase H 2 (148 aa).

Residues Leu74, Gly106, and 125-130 (FSKMTF) each bind S-adenosyl-L-methionine.

It belongs to the RNA methyltransferase RlmH family. Homodimer.

Its subcellular location is the cytoplasm. It catalyses the reaction pseudouridine(1915) in 23S rRNA + S-adenosyl-L-methionine = N(3)-methylpseudouridine(1915) in 23S rRNA + S-adenosyl-L-homocysteine + H(+). Specifically methylates the pseudouridine at position 1915 (m3Psi1915) in 23S rRNA. This Caldanaerobacter subterraneus subsp. tengcongensis (strain DSM 15242 / JCM 11007 / NBRC 100824 / MB4) (Thermoanaerobacter tengcongensis) protein is Ribosomal RNA large subunit methyltransferase H 2.